Consider the following 406-residue polypeptide: NAC transcription factor NAM-1 (406 aa).

Residues 1 to 11 (MGSPDSSSGSA) show a composition bias toward polar residues. A disordered region spans residues 1-40 (MGSPDSSSGSAQKPPRHQHQHQPPPPRRQGSAPELPPGFR). One can recognise an NAC domain in the interval 35–204 (LPPGFRFHPT…DWVLCRIYKK (170 aa)). The DNA-binding element occupies 137-210 (VGVKKALVFY…IYKKTSKAAA (74 aa)).

The protein resides in the nucleus. Transcription factor of the NAC family associated with the grain protein content (GPC). Accelerates senescence and increases nutrient remobilization from leaves to developing grains. Sequences of 11 European varieties of H.vulgare tested belongs to the same haplotype while the sequence found in H.spontaneum, an ancestor of the cultivated H.vulgare which has a higher GPC, belongs to an other haplotype. This is NAC transcription factor NAM-1 (NAM-1) from Hordeum vulgare subsp. vulgare (Domesticated barley).